The chain runs to 316 residues: Mycothiol acetyltransferase (316 aa).

N-acetyltransferase domains follow at residues 16–153 and 156–316; these read REVR…VPAV and VRIR…PAAN. Residue Glu36 coordinates 1D-myo-inositol 2-(L-cysteinylamino)-2-deoxy-alpha-D-glucopyranoside. Acetyl-CoA contacts are provided by residues 83–85 and 91–96; these read LVV and RRGIGS. 1D-myo-inositol 2-(L-cysteinylamino)-2-deoxy-alpha-D-glucopyranoside is bound by residues Glu183, Lys228, and Glu238. Acetyl-CoA-binding positions include 242-244 and 249-255; these read VGV and QGRGLGQ. Tyr283 contacts 1D-myo-inositol 2-(L-cysteinylamino)-2-deoxy-alpha-D-glucopyranoside. 288-293 is a binding site for acetyl-CoA; sequence NVAAVR.

Belongs to the acetyltransferase family. MshD subfamily. As to quaternary structure, monomer.

It catalyses the reaction 1D-myo-inositol 2-(L-cysteinylamino)-2-deoxy-alpha-D-glucopyranoside + acetyl-CoA = mycothiol + CoA + H(+). Its function is as follows. Catalyzes the transfer of acetyl from acetyl-CoA to desacetylmycothiol (Cys-GlcN-Ins) to form mycothiol. This chain is Mycothiol acetyltransferase, found in Mycobacterium avium (strain 104).